The following is a 117-amino-acid chain: Large-conductance mechanosensitive channel (117 aa).

3 consecutive transmembrane segments (helical) span residues 7–27 (EFALKGNVLDLAIAVVMGAAF), 30–50 (IVTSLVTYIIMPLIGKIFGSV), and 64–84 (GLFIQSIIDFIIVAIALFIFV).

The protein belongs to the MscL family. In terms of assembly, homopentamer.

Its subcellular location is the cell membrane. Its function is as follows. Channel that opens in response to stretch forces in the membrane lipid bilayer. May participate in the regulation of osmotic pressure changes within the cell. The sequence is that of Large-conductance mechanosensitive channel from Staphylococcus haemolyticus (strain JCSC1435).